We begin with the raw amino-acid sequence, 99 residues long: MAEGGFDPCECVCSHEHAMRRLINLLRQSQSYCTDTECLQELPGPSGDNGISVTMILVAWMVIALILFLLRPPNLRGSSLPGKPTSPHNGQDPPAPPVD.

Residues 1 to 49 lie on the Lumenal side of the membrane; sequence MAEGGFDPCECVCSHEHAMRRLINLLRQSQSYCTDTECLQELPGPSGDN. Residues 50–70 form a helical membrane-spanning segment; the sequence is GISVTMILVAWMVIALILFLL. Residues 71 to 99 are Cytoplasmic-facing; it reads RPPNLRGSSLPGKPTSPHNGQDPPAPPVD. The interval 78-99 is disordered; that stretch reads SSLPGKPTSPHNGQDPPAPPVD.

It is found in the endoplasmic reticulum membrane. The protein is Small integral membrane protein 14 (SMIM14) of Homo sapiens (Human).